The primary structure comprises 134 residues: Cytochrome b (134 aa).

A run of 3 helical transmembrane segments spans residues 33–53, 77–98, and 113–133; these read FGSLLGVCLATQILTGLFLAM, WILRYLHANGASMFFICLFLHV, and WNIGIILLFAVMATAFMGYVL. Residues His-83 and His-97 each coordinate heme b.

The protein belongs to the cytochrome b family. As to quaternary structure, the cytochrome bc1 complex contains 11 subunits: 3 respiratory subunits (MT-CYB, CYC1 and UQCRFS1), 2 core proteins (UQCRC1 and UQCRC2) and 6 low-molecular weight proteins (UQCRH/QCR6, UQCRB/QCR7, UQCRQ/QCR8, UQCR10/QCR9, UQCR11/QCR10 and a cleavage product of UQCRFS1). This cytochrome bc1 complex then forms a dimer. The cofactor is heme b.

It localises to the mitochondrion inner membrane. In terms of biological role, component of the ubiquinol-cytochrome c reductase complex (complex III or cytochrome b-c1 complex) that is part of the mitochondrial respiratory chain. The b-c1 complex mediates electron transfer from ubiquinol to cytochrome c. Contributes to the generation of a proton gradient across the mitochondrial membrane that is then used for ATP synthesis. This chain is Cytochrome b (MT-CYB), found in Rhinolophus hipposideros (Lesser horseshoe bat).